Reading from the N-terminus, the 249-residue chain is Phosphate import ATP-binding protein PstB (249 aa).

In terms of domain architecture, ABC transporter spans 3–244 (IEANDVHVYY…PKKKRTQNYI (242 aa)). 35 to 42 (GPSGCGKS) is an ATP binding site.

This sequence belongs to the ABC transporter superfamily. Phosphate importer (TC 3.A.1.7) family. In terms of assembly, the complex is composed of two ATP-binding proteins (PstB), two transmembrane proteins (PstC and PstA) and a solute-binding protein (PstS).

Its subcellular location is the cell inner membrane. The enzyme catalyses phosphate(out) + ATP + H2O = ADP + 2 phosphate(in) + H(+). Functionally, part of the ABC transporter complex PstSACB involved in phosphate import. Responsible for energy coupling to the transport system. This is Phosphate import ATP-binding protein PstB from Cytophaga hutchinsonii (strain ATCC 33406 / DSM 1761 / CIP 103989 / NBRC 15051 / NCIMB 9469 / D465).